The chain runs to 2715 residues: Histone-lysine N-methyltransferase 2B (2715 aa).

Positions 1–11 (MAAAAGGGSCP) are enriched in gly residues. 4 disordered regions span residues 1–65 (MAAA…GEDT), 81–302 (RRLW…GGLP), 320–518 (SLGL…PKST), and 532–771 (VSAR…QMPP). Alanine 2 bears the N-acetylalanine mark. Over residues 12–24 (GPGSARGRFPGRP) the composition is skewed to low complexity. Positions 17–36 (RGRFPGRPRGAGGGGGRGGR) match the Menin-binding motif (MBM) motif. 2 stretches are compositionally biased toward gly residues: residues 25–38 (RGAGGGGGRGGRGN) and 49–60 (RGGGATGPGGAE). Residues 37 to 44 (GNGAERVR) constitute a DNA-binding region (a.T hook 1). Residues 109–123 (PEEESSDGESDEEEF) are compositionally biased toward acidic residues. The segment at residues 110–117 (EEESSDGE) is a DNA-binding region (a.T hook 2). A phosphoserine mark is found at serine 113, serine 114, and serine 118. Residues 144 to 158 (QRGRAPRGRGRKHKT) show a composition bias toward basic residues. Residues 160-176 (PLPPPRLADVAPTPPKT) show a composition bias toward pro residues. A compositionally biased stretch (low complexity) spans 199–208 (RAQAPQAPRS). At serine 351 the chain carries Phosphoserine. Positions 357-365 (QEQKLDDEE) form a DNA-binding region, a.T hook 3. The segment covering 361 to 374 (LDDEEEEKKEEEEK) has biased composition (acidic residues). Over residues 375–387 (DKEGEEKEERAVA) the composition is skewed to basic and acidic residues. Positions 401 to 449 (LPPPPLTPPAPSPPPPLPPPSTSPPPPLCPPPPPPVSPPPLPSPPPPPA) are enriched in pro residues. The segment covering 545–556 (RFMDEDPPKPPK) has biased composition (basic and acidic residues). Positions 568-596 (TTSPPVPQEPAPVPSPPRAPTPPSTPVPL) are enriched in pro residues. The segment covering 597 to 608 (PEKRRSILREPT) has biased composition (basic and acidic residues). Pro residues predominate over residues 618–637 (LPPPPPAPPPPPAPSPPPAP). A compositionally biased stretch (low complexity) spans 731-751 (PQTQAQLLQPLQALQTQLLPQ). Residues 752 to 769 (ALPPPQPQLQPPPSPQQM) show a composition bias toward pro residues. Lysine 805 participates in a covalent cross-link: Glycyl lysine isopeptide (Lys-Gly) (interchain with G-Cter in SUMO2). Disordered stretches follow at residues 819-868 (PLSP…GPRI) and 894-959 (SALP…HHGK). Phosphoserine is present on residues serine 821, serine 844, and serine 861. The span at 836 to 857 (ISDRGPVRSEDESVEAKRERPS) shows a compositional bias: basic and acidic residues. Positions 907-917 (EDTSSASETES) are enriched in low complexity. Serine 936 carries the phosphoserine modification. Positions 948 to 959 (TPRRSLPSHHGK) are enriched in basic residues. The CXXC-type zinc finger occupies 959–1006 (KKMRMARCGHCRGCLRVQDCGSCVNCLDKPKFGGPNTKKQCCVYRKCD). Positions 966, 969, 972, 978, 981, 984, 1000, and 1005 each coordinate Zn(2+). Residues 1027 to 1132 (LLPWDSDESP…RPRKPTLQPV (106 aa)) form a disordered region. Phosphoserine occurs at positions 1032, 1035, 1092, and 1095. A Glycyl lysine isopeptide (Lys-Gly) (interchain with G-Cter in SUMO2) cross-link involves residue lysine 1136. The interval 1146-1166 (LAPGPFASFPNGWTGKQKSPD) is disordered. 3 PHD-type zinc fingers span residues 1201 to 1252 (PMVC…CKFC), 1249 to 1303 (CKFC…CVRC), and 1335 to 1396 (GNYC…CAGA). Residues 1404–1504 (ALSGALQGGL…GLLLKLLESA (101 aa)) enclose the Bromo domain. Residues 1545-1567 (QQEPETPESGQPPGDPSAAFQGK) are disordered. Residues 1578-1618 (PRQCALCLKYGDADSKEAGRLLYIGQNEWTHVNCAIWSAEV) form a C2HC pre-PHD-type zinc finger. The segment at 1639 to 1686 (MRCELCLKPGATVGCCLSSCLSNFHFMCARASYCIFQDDKKVFCQKHT) adopts a PHD-type 4 zinc-finger fold. The FYR N-terminal domain occupies 1727–1783 (AINVLIGSIRIDSLGTLSDLSDCEGRLFPIGYQCSRLYWSTVDARRRCWYRCRILEY). Disordered regions lie at residues 1806–1978 (HSPA…PDFE), 2008–2093 (VAAG…VVRA), 2118–2162 (LKNL…PTRT), and 2280–2412 (RVST…RTGP). The segment covering 1876–1894 (PLGGVSFGPLPSPGSPSSL) has biased composition (low complexity). Serine 1930 and serine 1936 each carry phosphoserine. Residues 1960–1972 (PPGPAPSPPPPED) are compositionally biased toward pro residues. Positions 2062–2072 (DGVDDGTDSEA) are enriched in acidic residues. Phosphothreonine occurs at positions 2068 and 2083. A compositionally biased stretch (polar residues) spans 2144-2153 (NGSQPSQGLT). Serine 2288 and serine 2348 each carry phosphoserine. Residues 2342-2351 (EPAGEESPGP) are compositionally biased toward low complexity. Residues 2359-2373 (LPLPEDGPPQVPDGP) are compositionally biased toward pro residues. In terms of domain architecture, FYR C-terminal spans 2411–2492 (GPHLRFEISS…QRCQHYKFRY (82 aa)). The WDR5 interaction motif (WIN) motif lies at 2508–2513 (GAARAE). The 117-residue stretch at 2575–2691 (EAVGVYRSAI…RGEELTYDYK (117 aa)) folds into the SET domain. Residues histidine 2585, arginine 2587, tyrosine 2629, and 2652–2653 (NH) each bind S-adenosyl-L-methionine. Positions 2655 and 2703 each coordinate Zn(2+). Positions 2699–2715 (NKLPCNCGAKRCRRFLN) constitute a Post-SET domain. Asparagine 2704 contacts S-adenosyl-L-methionine. Zn(2+) contacts are provided by cysteine 2705 and cysteine 2710.

This sequence belongs to the class V-like SAM-binding methyltransferase superfamily. Histone-lysine methyltransferase family. TRX/MLL subfamily. In terms of assembly, component of the menin-associated histone methyltransferase complex, at least composed of KMT2B/MLL4, ASH2L, RBBP5, WDR5, DPY30, MEN1; the complex interacts with POLR2A and POLR2B via MEN1. Interacts with NFE2. Interacts with KDM6B. Interacts (via WIN motif) with WDR5. Interacts (via MBM motif) with MEN1. Forms a core complex with the evolutionary conserved subcomplex WRAD composed of WDR5, RBBP5, ASH2L/ASH2 and DPY30 subunits; WRAD differentially stimulates the methyltransferase activity. Widely expressed. Highest levels in testis. Also found in brain with higher expression in the cerebellum than in any other region, bone marrow, heart, muscle, kidney, placenta, spleen, thymus, prostate, ovary, intestine, colon, peripheral blood lymphocytes and pancreas. Often amplified in pancreatic carcinomas.

It localises to the nucleus. The enzyme catalyses L-lysyl(4)-[histone H3] + S-adenosyl-L-methionine = N(6)-methyl-L-lysyl(4)-[histone H3] + S-adenosyl-L-homocysteine + H(+). The catalysed reaction is N(6)-methyl-L-lysyl(4)-[histone H3] + S-adenosyl-L-methionine = N(6),N(6)-dimethyl-L-lysyl(4)-[histone H3] + S-adenosyl-L-homocysteine + H(+). Its function is as follows. Histone methyltransferase that catalyzes methyl group transfer from S-adenosyl-L-methionine to the epsilon-amino group of 'Lys-4' of histone H3 (H3K4) via a non-processive mechanism. Part of chromatin remodeling machinery predominantly forms H3K4me1 and H3K4me2 methylation marks at active chromatin sites where transcription and DNA repair take place. Likely plays a redundant role with KMT2C in enriching H3K4me1 marks on primed and active enhancer elements. Plays a central role in beta-globin locus transcription regulation by being recruited by NFE2. Plays an important role in controlling bulk H3K4me during oocyte growth and preimplantation development. Required during the transcriptionally active period of oocyte growth for the establishment and/or maintenance of bulk H3K4 trimethylation (H3K4me3), global transcriptional silencing that preceeds resumption of meiosis, oocyte survival and normal zygotic genome activation. The chain is Histone-lysine N-methyltransferase 2B (KMT2B) from Homo sapiens (Human).